The primary structure comprises 168 residues: Crossover junction endodeoxyribonuclease RuvC (168 aa).

Active-site residues include Asp-9, Glu-69, and Asp-141. 3 residues coordinate Mg(2+): Asp-9, Glu-69, and Asp-141.

The protein belongs to the RuvC family. Homodimer which binds Holliday junction (HJ) DNA. The HJ becomes 2-fold symmetrical on binding to RuvC with unstacked arms; it has a different conformation from HJ DNA in complex with RuvA. In the full resolvosome a probable DNA-RuvA(4)-RuvB(12)-RuvC(2) complex forms which resolves the HJ. Mg(2+) serves as cofactor.

It localises to the cytoplasm. It carries out the reaction Endonucleolytic cleavage at a junction such as a reciprocal single-stranded crossover between two homologous DNA duplexes (Holliday junction).. Functionally, the RuvA-RuvB-RuvC complex processes Holliday junction (HJ) DNA during genetic recombination and DNA repair. Endonuclease that resolves HJ intermediates. Cleaves cruciform DNA by making single-stranded nicks across the HJ at symmetrical positions within the homologous arms, yielding a 5'-phosphate and a 3'-hydroxyl group; requires a central core of homology in the junction. The consensus cleavage sequence is 5'-(A/T)TT(C/G)-3'. Cleavage occurs on the 3'-side of the TT dinucleotide at the point of strand exchange. HJ branch migration catalyzed by RuvA-RuvB allows RuvC to scan DNA until it finds its consensus sequence, where it cleaves and resolves the cruciform DNA. This chain is Crossover junction endodeoxyribonuclease RuvC, found in Bdellovibrio bacteriovorus (strain ATCC 15356 / DSM 50701 / NCIMB 9529 / HD100).